A 329-amino-acid chain; its full sequence is GTP 3',8-cyclase (329 aa).

One can recognise a Radical SAM core domain in the interval 8–234 (AFARKFYYLR…QLRQRSDGPA (227 aa)). R17 serves as a coordination point for GTP. C24 and C28 together coordinate [4Fe-4S] cluster. Y30 serves as a coordination point for S-adenosyl-L-methionine. [4Fe-4S] cluster is bound at residue C31. R68 lines the GTP pocket. G72 provides a ligand contact to S-adenosyl-L-methionine. GTP is bound at residue T99. S-adenosyl-L-methionine is bound at residue S123. K160 contacts GTP. M194 is a binding site for S-adenosyl-L-methionine. The [4Fe-4S] cluster site is built by C257 and C260. Residue 262–264 (RLR) participates in GTP binding. C274 contributes to the [4Fe-4S] cluster binding site.

It belongs to the radical SAM superfamily. MoaA family. Monomer and homodimer. Requires [4Fe-4S] cluster as cofactor.

It catalyses the reaction GTP + AH2 + S-adenosyl-L-methionine = (8S)-3',8-cyclo-7,8-dihydroguanosine 5'-triphosphate + 5'-deoxyadenosine + L-methionine + A + H(+). It participates in cofactor biosynthesis; molybdopterin biosynthesis. In terms of biological role, catalyzes the cyclization of GTP to (8S)-3',8-cyclo-7,8-dihydroguanosine 5'-triphosphate. The polypeptide is GTP 3',8-cyclase (Escherichia coli O127:H6 (strain E2348/69 / EPEC)).